The chain runs to 312 residues: Ribosomal RNA small subunit methyltransferase H (312 aa).

S-adenosyl-L-methionine-binding positions include 34–36, Asp54, Phe81, Asp102, and Gln109; that span reads AGH.

Belongs to the methyltransferase superfamily. RsmH family.

It localises to the cytoplasm. The enzyme catalyses cytidine(1402) in 16S rRNA + S-adenosyl-L-methionine = N(4)-methylcytidine(1402) in 16S rRNA + S-adenosyl-L-homocysteine + H(+). In terms of biological role, specifically methylates the N4 position of cytidine in position 1402 (C1402) of 16S rRNA. The sequence is that of Ribosomal RNA small subunit methyltransferase H from Geobacter sp. (strain M21).